The following is a 138-amino-acid chain: Holo-[acyl-carrier-protein] synthase (138 aa).

2 residues coordinate Mg(2+): Asp8 and Glu56.

This sequence belongs to the P-Pant transferase superfamily. AcpS family. Mg(2+) is required as a cofactor.

The protein resides in the cytoplasm. The catalysed reaction is apo-[ACP] + CoA = holo-[ACP] + adenosine 3',5'-bisphosphate + H(+). Functionally, transfers the 4'-phosphopantetheine moiety from coenzyme A to a Ser of acyl-carrier-protein. In Thermoanaerobacter pseudethanolicus (strain ATCC 33223 / 39E) (Clostridium thermohydrosulfuricum), this protein is Holo-[acyl-carrier-protein] synthase.